A 119-amino-acid polypeptide reads, in one-letter code: Large ribosomal subunit protein bL20 (119 aa).

It belongs to the bacterial ribosomal protein bL20 family.

Its function is as follows. Binds directly to 23S ribosomal RNA and is necessary for the in vitro assembly process of the 50S ribosomal subunit. It is not involved in the protein synthesizing functions of that subunit. The chain is Large ribosomal subunit protein bL20 from Burkholderia cenocepacia (strain HI2424).